We begin with the raw amino-acid sequence, 180 residues long: Large ribosomal subunit protein uL6 (180 aa).

Belongs to the universal ribosomal protein uL6 family. Part of the 50S ribosomal subunit.

This protein binds to the 23S rRNA, and is important in its secondary structure. It is located near the subunit interface in the base of the L7/L12 stalk, and near the tRNA binding site of the peptidyltransferase center. This chain is Large ribosomal subunit protein uL6, found in Bdellovibrio bacteriovorus (strain ATCC 15356 / DSM 50701 / NCIMB 9529 / HD100).